A 124-amino-acid polypeptide reads, in one-letter code: Small ribosomal subunit protein bS6 (124 aa).

The interval 96–124 is disordered; sequence ETGPSPMMKEVQREEAKKSAATQPSEAQA. Over residues 115–124 the composition is skewed to polar residues; that stretch reads AATQPSEAQA.

The protein belongs to the bacterial ribosomal protein bS6 family.

Its function is as follows. Binds together with bS18 to 16S ribosomal RNA. The sequence is that of Small ribosomal subunit protein bS6 from Paraburkholderia phytofirmans (strain DSM 17436 / LMG 22146 / PsJN) (Burkholderia phytofirmans).